The following is a 542-amino-acid chain: GATA-type transcription factor sreA (542 aa).

Over residues 1–10 (MLTLRSSSDT) the composition is skewed to polar residues. The tract at residues 1–172 (MLTLRSSSDT…SAQNASGCGS (172 aa)) is disordered. The span at 44–63 (ADLRPDSFDASRSPDGDKAS) shows a compositional bias: basic and acidic residues. Low complexity-rich tracts occupy residues 75–117 (SSDQ…PKAS) and 148–168 (SSTSDPRASPAASDASAQNAS). The cystein-rich region (CRR) stretch occupies residues 178–196 (CPGGGSCNGTGGAVGCDGC). Over residues 210–223 (APSARQARASPSAQ) the composition is skewed to low complexity. The tract at residues 210-248 (APSARQARASPSAQTSEEQAQSGLDALDSASQDASGMPK) is disordered. The GATA-type zinc finger occupies 250–274 (CQNCGTTLTPLWRRDDQGNTICNAC). A compositionally biased stretch (basic residues) spans 289–300 (MKKTVIKRRKRV). Disordered stretches follow at residues 289 to 408 (MKKT…PATR) and 461 to 525 (SNAP…REAE). Composition is skewed to polar residues over residues 311-320 (AGSSDNSSVS) and 369-387 (KPTQSTSSPGLNTLINHSP). Over residues 396–407 (ESTSAESAPPAT) the composition is skewed to low complexity. The segment covering 464–483 (PARSQTQTQPQPGTRSYSPN) has biased composition (polar residues). The stretch at 510 to 542 (DKVKAARRAQLQREAENMREALRAKERELASLK) forms a coiled coil.

The protein localises to the nucleus. Functionally, GATA-type transcription repressor that regulates iron acquisition genes through specific binding the GATA sequence elements of target promoters. SreA targets include genes encoding a number of key iron-regulated factors such as the siderophore biosynthesis genes. Is dispensable for growth on keratin substrates. SreA represses the expression of hapX and the siderophore system during iron sufficient conditions by an iron-sensing mechanism, while hapX represses sreA and activates the siderophore system during iron-limiting conditions resulting in efficient iron uptake and inhibition of iron-consuming pathways. The polypeptide is GATA-type transcription factor sreA (Arthroderma benhamiae (strain ATCC MYA-4681 / CBS 112371) (Trichophyton mentagrophytes)).